Consider the following 221-residue polypeptide: Secreted protein BARF1 (221 aa).

Residues 1–20 (MARFIAQLLLLASCVAAGQA) form the signal peptide. Ig-like domains are found at residues 21-120 (VTAF…EHLS) and 124-220 (PLTL…GYLS). A glycan (N-linked (GlcNAc...) asparagine; by host) is linked at Asn95. Cys146 and Cys201 are joined by a disulfide.

Homohexamer. Interacts with human CSF1. In terms of processing, phosphorylated on serine and threonine by host.

It localises to the secreted. Functionally, plays diverse functions in immunomodulation and oncogenicity, maybe by acting as a functional receptor for human CSF1. May inhibit interferon secretion from mononuclear cells. Exhibits oncogenic activity in vitro. This is Secreted protein BARF1 from Epstein-Barr virus (strain B95-8) (HHV-4).